The sequence spans 841 residues: GRIP1-associated protein 1 (841 aa).

Position 2 is an N-acetylalanine (alanine 2). Coiled coils occupy residues 4–161 (ALSE…YGKE) and 208–641 (EQLQ…NSKS). Disordered stretches follow at residues 532–551 (AEES…KQCR) and 558–580 (LKGK…EERD). 8 positions are modified to phosphoserine: serine 655, serine 666, serine 668, serine 669, serine 688, serine 690, serine 691, and serine 692. Positions 681-706 (SSAVPARSLSSSPQAQPPRPAELSDE) are disordered. The span at 682–694 (SAVPARSLSSSPQ) shows a compositional bias: low complexity. Coiled coils occupy residues 701–735 (AELS…LEVS) and 785–814 (DENL…KDME).

Interacts with GRIP1, GRIP2 and AMPA receptors. Interacts (via C-terminus) with MAPK8/JNK1 and MAP3K1/MEKK1; the interaction promotes MAP3K1-mediated phosphorylation of MAPK8. Interacts (via N-terminus) with RAB4A (in GTP-bound form). Interacts (via C-terminus) with STX12. In terms of processing, proteolytically cleaved by caspase-3. A minor C-terminal proteolytic fragment of 30 kDa is produced. Proteolytic cleavage is required for JNK signaling activation.

Its subcellular location is the early endosome membrane. It is found in the recycling endosome membrane. It localises to the cell projection. The protein resides in the axon. The protein localises to the dendrite. Its subcellular location is the synapse. Regulates the endosomal recycling back to the neuronal plasma membrane, possibly by connecting early and late recycling endosomal domains and promoting segregation of recycling endosomes from early endosomal membranes. Involved in the localization of recycling endosomes to dendritic spines, thereby playing a role in the maintenance of dendritic spine morphology. Required for the activity-induced AMPA receptor recycling to dendrite membranes and for long-term potentiation and synaptic plasticity. In terms of biological role, functions as a scaffold protein to facilitate MAP3K1/MEKK1-mediated activation of the JNK1 kinase by phosphorylation, possibly by bringing MAP3K1/MEKK1 and JNK1 in close proximity. The sequence is that of GRIP1-associated protein 1 from Homo sapiens (Human).